Here is a 333-residue protein sequence, read N- to C-terminus: S-adenosylmethionine-dependent nucleotide dehydratase (333 aa).

The Radical SAM core domain occupies methionine 1 to isoleucine 239. Residues cysteine 16, cysteine 20, and cysteine 23 each contribute to the [4Fe-4S] cluster site.

It belongs to the radical SAM superfamily. Viperin family. [4Fe-4S] cluster is required as a cofactor.

The enzyme catalyses GTP + AH2 + S-adenosyl-L-methionine = 3'-deoxy-3',4'-didehydro-GTP + 5'-deoxyadenosine + L-methionine + A + H2O + H(+). In terms of biological role, expression of pVip56 in E.coli (strain MG1655) confers resistance to phage P1; has no effect against T7. Catalyzes the conversion of guanosine triphosphate (GTP) to 3'-deoxy-3',4'-didehydro-GTP (ddhGTP), probably via a SAM-dependent radical mechanism. The modified nucleotide represses transcription from T7 RNA polymerase-directed genes (possibly by acting as chain terminators), strongly suggesting these nucleotides block viral polymerase transcription. How this protein allows bacteria to resist viruses that do not encode their own RNA polymerase (such as lambda, P1) is unknown. The sequence is that of S-adenosylmethionine-dependent nucleotide dehydratase from Fibrobacter sp. (strain UWH6).